A 345-amino-acid polypeptide reads, in one-letter code: tRNA-specific 2-thiouridylase MnmA (345 aa).

ATP is bound by residues 6–13 and leucine 32; that span reads LMSGGVDS. Cysteine 92 functions as the Nucleophile in the catalytic mechanism. Residues cysteine 92 and cysteine 191 are joined by a disulfide bond. Glycine 116 is an ATP binding site. The interval 138-140 is interaction with tRNA; sequence KDQ. Cysteine 191 acts as the Cysteine persulfide intermediate in catalysis. Residues 293 to 294 form an interaction with tRNA region; that stretch reads RY.

Belongs to the MnmA/TRMU family.

Its subcellular location is the cytoplasm. It catalyses the reaction S-sulfanyl-L-cysteinyl-[protein] + uridine(34) in tRNA + AH2 + ATP = 2-thiouridine(34) in tRNA + L-cysteinyl-[protein] + A + AMP + diphosphate + H(+). Catalyzes the 2-thiolation of uridine at the wobble position (U34) of tRNA, leading to the formation of s(2)U34. The chain is tRNA-specific 2-thiouridylase MnmA from Helicobacter hepaticus (strain ATCC 51449 / 3B1).